Here is a 155-residue protein sequence, read N- to C-terminus: 3-hydroxyacyl-[acyl-carrier-protein] dehydratase FabZ (155 aa).

Histidine 58 is an active-site residue.

Belongs to the thioester dehydratase family. FabZ subfamily.

It localises to the cytoplasm. The enzyme catalyses a (3R)-hydroxyacyl-[ACP] = a (2E)-enoyl-[ACP] + H2O. Its function is as follows. Involved in unsaturated fatty acids biosynthesis. Catalyzes the dehydration of short chain beta-hydroxyacyl-ACPs and long chain saturated and unsaturated beta-hydroxyacyl-ACPs. This is 3-hydroxyacyl-[acyl-carrier-protein] dehydratase FabZ from Rhizobium leguminosarum bv. trifolii (strain WSM2304).